We begin with the raw amino-acid sequence, 453 residues long: Venom prothrombin activator notecarin-D2 (453 aa).

The first 20 residues, 1-20 (MAPQLLLCLILTFLWSLPEA), serve as a signal peptide directing secretion. Positions 21 to 40 (ESNVFLKSKVANRFLQRTKR) are excised as a propeptide. One can recognise a Gla domain in the interval 41–86 (SNSLFEEIRPGNIERECIEEKCSKEEAREVFEDNEKTETFWNVYVD). 4-carboxyglutamate is present on residues Glu-46, Glu-47, Glu-54, Glu-56, Glu-59, Glu-60, Glu-65, Glu-66, Glu-69, Glu-72, and Glu-75. A disulfide bond links Cys-57 and Cys-62. The 37-residue stretch at 86–122 (DGDQCSSNPCHYRGTCKDGIGSYTCTCLPNYEGKNCE) folds into the EGF-like 1; calcium-binding domain. Intrachain disulfides connect Cys-90/Cys-101, Cys-95/Cys-110, Cys-112/Cys-121, Cys-129/Cys-140, Cys-136/Cys-149, Cys-151/Cys-164, Cys-172/Cys-326, Cys-216/Cys-221, Cys-236/Cys-252, Cys-374/Cys-388, and Cys-399/Cys-427. The O-linked (Hex...) serine glycan is linked to Ser-92. An EGF-like 2 domain is found at 129-164 (CRAFNGNCWHFCKRVQSETQCSCAESYLLGVDGHSC). The propeptide at 182 to 209 (REASLPDFVQSQKATVLKKSDNPSPDIR) is activation peptide. The Peptidase S1 domain maps to 210–451 (IVNGMDCKLG…FIPWIKKIMS (242 aa)). Residue His-251 is the Charge relay system of the active site. The N-linked (GlcNAc...) asparagine glycan is linked to Asn-254. The Charge relay system role is filled by Asp-306. Ser-403 (charge relay system) is an active-site residue.

Belongs to the peptidase S1 family. Snake venom subfamily. In terms of assembly, heterodimer of a light chain and a heavy chain; disulfide-linked. Gamma-carboxyglutamate residues are formed by vitamin K dependent carboxylation. These residues are essential for the binding of calcium. In terms of tissue distribution, expressed by the venom gland.

The protein localises to the secreted. It carries out the reaction Selective cleavage of Arg-|-Thr and then Arg-|-Ile bonds in prothrombin to form thrombin.. Snake prothrombin activator that attacks the hemostatic system of prey. This protein is functionally similar to blood coagulation factor Xa. This chain is Venom prothrombin activator notecarin-D2, found in Notechis scutatus scutatus (Mainland tiger snake).